The sequence spans 438 residues: Serine hydroxymethyltransferase (438 aa).

A (6S)-5,6,7,8-tetrahydrofolate-binding site is contributed by Gly133–Ile135. The residue at position 239 (Lys239) is an N6-(pyridoxal phosphate)lysine.

Belongs to the SHMT family. Homodimer. Pyridoxal 5'-phosphate serves as cofactor.

It localises to the cytoplasm. It catalyses the reaction 5,10-methylenetetrahydromethanopterin + glycine + H2O = 5,6,7,8-tetrahydromethanopterin + L-serine. The protein operates within amino-acid biosynthesis; glycine biosynthesis; glycine from L-serine: step 1/1. Its function is as follows. Catalyzes the reversible interconversion of serine and glycine with tetrahydromethanopterin (H4MPT) serving as the one-carbon carrier. Also exhibits a pteridine-independent aldolase activity toward beta-hydroxyamino acids, producing glycine and aldehydes, via a retro-aldol mechanism. The sequence is that of Serine hydroxymethyltransferase from Archaeoglobus fulgidus (strain ATCC 49558 / DSM 4304 / JCM 9628 / NBRC 100126 / VC-16).